The sequence spans 78 residues: Acyl carrier protein (78 aa).

In terms of domain architecture, Carrier spans 1–76; that stretch reads MALFEDIQAV…DVVKYIEDNK (76 aa). Ser-36 carries the O-(pantetheine 4'-phosphoryl)serine modification.

Belongs to the acyl carrier protein (ACP) family. Post-translationally, 4'-phosphopantetheine is transferred from CoA to a specific serine of apo-ACP by AcpS. This modification is essential for activity because fatty acids are bound in thioester linkage to the sulfhydryl of the prosthetic group.

Its subcellular location is the cytoplasm. Its pathway is lipid metabolism; fatty acid biosynthesis. Carrier of the growing fatty acid chain in fatty acid biosynthesis. This chain is Acyl carrier protein, found in Helicobacter pylori (strain Shi470).